Reading from the N-terminus, the 326-residue chain is Phosphotriesterase homology protein (326 aa).

Zn(2+)-binding residues include H22, H24, K145, H178, H207, and D264. N6-carboxylysine is present on K145.

It belongs to the metallo-dependent hydrolases superfamily. Phosphotriesterase family. It depends on Zn(2+) as a cofactor.

The chain is Phosphotriesterase homology protein (php) from Mycobacterium tuberculosis (strain CDC 1551 / Oshkosh).